Reading from the N-terminus, the 620-residue chain is KIF-binding protein (620 aa).

2 coiled-coil regions span residues 30-64 and 133-169; these read YKSK…QDIL and LIKS…QLQN.

Belongs to the KIF-binding protein family.

The protein localises to the cytoplasm. It localises to the cytoskeleton. Functionally, activator of KIF1B plus-end-directed microtubule motor activity. Required for organization of axonal microtubules, and axonal outgrowth and maintenance during peripheral and central nervous system development. The protein is KIF-binding protein (kifbp) of Dictyostelium discoideum (Social amoeba).